We begin with the raw amino-acid sequence, 191 residues long: Cathelicidin-related antimicrobial peptide Na_CRAMP (191 aa).

Residues methionine 1–serine 22 form the signal peptide. Residues phenylalanine 23–lysine 161 constitute a propeptide that is removed on maturation. 2 disulfide bridges follow: cysteine 81–cysteine 92 and cysteine 103–cysteine 120. The segment at glutamate 126 to proline 154 is disordered. Positions glutamate 140–proline 154 are enriched in basic and acidic residues.

The protein belongs to the cathelicidin family. As to expression, expressed by the venom gland.

It localises to the secreted. The protein localises to the target cell membrane. Its function is as follows. Potent antimicrobial peptide against most of Gram-negative bacteria, some Gram-positive bacteria (Bacillus) and some fungi. Adopts an amphipathic alpha helical conformation, that may allow to partition into the target membrane. No hemolytic and cytotoxic activities have been observed on mammalian cells. The sequence is that of Cathelicidin-related antimicrobial peptide Na_CRAMP from Naja atra (Chinese cobra).